Here is a 77-residue protein sequence, read N- to C-terminus: Translation initiation factor IF-1, chloroplastic (77 aa).

One can recognise an S1-like domain in the interval 1-71; that stretch reads MKEQKLIHEG…TRGRIIYRLR (71 aa).

Belongs to the IF-1 family. Component of the 30S ribosomal translation pre-initiation complex which assembles on the 30S ribosome in the order IF-2 and IF-3, IF-1 and N-formylmethionyl-tRNA(fMet); mRNA recruitment can occur at any time during PIC assembly.

The protein resides in the plastid. Its subcellular location is the chloroplast. Functionally, one of the essential components for the initiation of protein synthesis. Stabilizes the binding of IF-2 and IF-3 on the 30S subunit to which N-formylmethionyl-tRNA(fMet) subsequently binds. Helps modulate mRNA selection, yielding the 30S pre-initiation complex (PIC). Upon addition of the 50S ribosomal subunit IF-1, IF-2 and IF-3 are released leaving the mature 70S translation initiation complex. The polypeptide is Translation initiation factor IF-1, chloroplastic (Calycanthus floridus var. glaucus (Eastern sweetshrub)).